The primary structure comprises 142 residues: Large ribosomal subunit protein uL13 (142 aa).

The protein belongs to the universal ribosomal protein uL13 family. As to quaternary structure, part of the 50S ribosomal subunit.

Its function is as follows. This protein is one of the early assembly proteins of the 50S ribosomal subunit, although it is not seen to bind rRNA by itself. It is important during the early stages of 50S assembly. The chain is Large ribosomal subunit protein uL13 from Burkholderia pseudomallei (strain 1106a).